The sequence spans 323 residues: MSVPWFNQFYKEIADSPLSAWLELLPGQISTWQKEQLHGDFNKWVKLLGKLPQTHPSEIELKERVEFGLQSEINEYTQKQIIGLLKQFMPWRKGPFHIHGIHIDTEWRSDWKWERVQPHIQSLENRYVLDVGCGSGYHMWRMLGENAKMVVGADPSQLFLMQFQATKHFNPDPRIHLLPVGVEQLPEKNAFDTVFSMGVLYHRKSPLDFLQQLKNQLRPGGELILETLVVEGDENTVLMAGDRYAQMRNVWFLPSTDALCLWMKRLGFKNVRVVDLAKTTIEEQRATQWMDSQSLVDFLDPNDHSKTIEGYPAPLRAVVVAER.

Carboxy-S-adenosyl-L-methionine contacts are provided by residues Lys93, Trp107, Lys112, Gly132, 154 to 156, 182 to 183, Met197, Tyr201, and Arg316; these read DPS and VE.

Belongs to the class I-like SAM-binding methyltransferase superfamily. CmoB family. Homotetramer.

The catalysed reaction is carboxy-S-adenosyl-L-methionine + 5-hydroxyuridine(34) in tRNA = 5-carboxymethoxyuridine(34) in tRNA + S-adenosyl-L-homocysteine + H(+). Catalyzes carboxymethyl transfer from carboxy-S-adenosyl-L-methionine (Cx-SAM) to 5-hydroxyuridine (ho5U) to form 5-carboxymethoxyuridine (cmo5U) at position 34 in tRNAs. The protein is tRNA U34 carboxymethyltransferase of Pseudoalteromonas atlantica (strain T6c / ATCC BAA-1087).